Reading from the N-terminus, the 155-residue chain is Large ribosomal subunit protein uL13 (155 aa).

This sequence belongs to the universal ribosomal protein uL13 family. Part of the 50S ribosomal subunit.

Functionally, this protein is one of the early assembly proteins of the 50S ribosomal subunit, although it is not seen to bind rRNA by itself. It is important during the early stages of 50S assembly. In Rickettsia felis (strain ATCC VR-1525 / URRWXCal2) (Rickettsia azadi), this protein is Large ribosomal subunit protein uL13.